The sequence spans 491 residues: Probable malate:quinone oxidoreductase (491 aa).

The protein belongs to the MQO family. FAD is required as a cofactor.

It catalyses the reaction (S)-malate + a quinone = a quinol + oxaloacetate. The protein operates within carbohydrate metabolism; tricarboxylic acid cycle; oxaloacetate from (S)-malate (quinone route): step 1/1. In Actinobacillus pleuropneumoniae serotype 7 (strain AP76), this protein is Probable malate:quinone oxidoreductase.